The primary structure comprises 492 residues: Probable endopolygalacturonase D (492 aa).

Positions 1 to 16 (MKRSALILSFLPLVFG) are cleaved as a signal peptide. A disulfide bond links cysteine 151 and cysteine 166. 4 PbH1 repeats span residues 216 to 238 (GTSVTITGVEGHVIDGNGAAYWD), 258 to 280 (MYNSRIENLYIQNWPVHCFEIES), 281 to 319 (TEHLTVSGLTLNNSAGDAANSKSDGDPAAHNSDGFDIKE), and 320 to 341 (SSYFTLENTWVHNQDDCVAVTS). Residue asparagine 292 is glycosylated (N-linked (GlcNAc...) asparagine). Aspartate 334 functions as the Proton donor in the catalytic mechanism. Residues cysteine 336 and cysteine 352 are joined by a disulfide bond. Histidine 356 is a catalytic residue. 3 PbH1 repeats span residues 371–392 (VNGVTFSNSQVISSQNGCRIKT), 400–422 (VYNIRYENITLSDISDYGIDVQQ), and 434–478 (TNGV…SITG). Asparagine 407 and asparagine 441 each carry an N-linked (GlcNAc...) asparagine glycan. 2 disulfide bridges follow: cysteine 461-cysteine 466 and cysteine 484-cysteine 491.

The protein belongs to the glycosyl hydrolase 28 family.

The protein resides in the secreted. The enzyme catalyses (1,4-alpha-D-galacturonosyl)n+m + H2O = (1,4-alpha-D-galacturonosyl)n + (1,4-alpha-D-galacturonosyl)m.. In terms of biological role, involved in maceration and soft-rotting of plant tissue. Hydrolyzes the 1,4-alpha glycosidic bonds of de-esterified pectate in the smooth region of the plant cell wall. The chain is Probable endopolygalacturonase D (pgaD) from Aspergillus oryzae (strain ATCC 42149 / RIB 40) (Yellow koji mold).